A 404-amino-acid polypeptide reads, in one-letter code: MAEICCEVVAGSSSEGKGPECDTGSRAARRRRMEIRRLRVVAERGAEEETSGKRRRLDGGGGEASTDEEDREVERARYGFTSVCGRRRDMEDSVSACPGFLPGHHFFGVFDGHGCSHVATSCGQRMHEIVVDEAGAAAGSAGLDEEARWRGVMERSFARMDAEAVASSRGSVAPAPTCRCEMQLPKCDHVGSTAVVAVLGPRHVVVANCGDSRAVLCRGGAAIPLSCDHKPDRPDELERIHAAGGRVIFWDGARVFGMLAMSRAIGDSYLKPYVICDPEVRVMERKDGEDEFLILASDGLWDVVSNEVACNVVRACLRSSGRRERNRSSPTSNLSPRQSSSSGDEAPNDGAPSAAAGSESDEESAAEEDKACAEAAVLLTKLALARQTSDNVSVVVVNLRRRKL.

Basic and acidic residues predominate over residues alanine 42–glycine 52. The interval alanine 42–glutamate 72 is disordered. In terms of domain architecture, PPM-type phosphatase spans arginine 77–leucine 399. Mn(2+)-binding residues include aspartate 111, glycine 112, and aspartate 298. The segment at glycine 321–aspartate 369 is disordered. Over residues proline 330–glycine 343 the composition is skewed to polar residues. Mn(2+) is bound at residue aspartate 390.

The protein belongs to the PP2C family. Interacts with PYL5 and SAPK2. Binding to PYL5 is dependent on the presence of abscisic acid (ABA). Interacts with PYL3, PYL5 and PYL9. Binding to PYL5 and PYL9 is dependent on the presence of ABA. The cofactor is Mg(2+). It depends on Mn(2+) as a cofactor.

It localises to the nucleus. It catalyses the reaction O-phospho-L-seryl-[protein] + H2O = L-seryl-[protein] + phosphate. It carries out the reaction O-phospho-L-threonyl-[protein] + H2O = L-threonyl-[protein] + phosphate. Its function is as follows. Together with ABI5, PYL5 and SAPK2, is part of an abscisic acid (ABA) signaling unit that modulates seed germination and early seedling growth. In Oryza sativa subsp. japonica (Rice), this protein is Probable protein phosphatase 2C 30.